The chain runs to 336 residues: Ornithine carbamoyltransferase, catabolic (336 aa).

Carbamoyl phosphate-binding positions include 62–65, glutamine 89, arginine 113, and 140–143; these read STRT and HPTQ. L-ornithine is bound by residues asparagine 172, aspartate 236, and 240–241; that span reads SM. Carbamoyl phosphate-binding positions include 277–278 and arginine 322; that span reads CL.

Belongs to the aspartate/ornithine carbamoyltransferase superfamily. OTCase family.

It localises to the cytoplasm. It carries out the reaction carbamoyl phosphate + L-ornithine = L-citrulline + phosphate + H(+). It participates in amino-acid degradation; L-arginine degradation via ADI pathway; carbamoyl phosphate from L-arginine: step 2/2. Functionally, reversibly catalyzes the transfer of the carbamoyl group from carbamoyl phosphate (CP) to the N(epsilon) atom of ornithine (ORN) to produce L-citrulline. The chain is Ornithine carbamoyltransferase, catabolic from Staphylococcus aureus (strain MRSA252).